The primary structure comprises 369 residues: Histidinol-phosphate aminotransferase 2 (369 aa).

N6-(pyridoxal phosphate)lysine is present on K231.

It belongs to the class-II pyridoxal-phosphate-dependent aminotransferase family. Histidinol-phosphate aminotransferase subfamily. In terms of assembly, homodimer. The cofactor is pyridoxal 5'-phosphate.

The catalysed reaction is L-histidinol phosphate + 2-oxoglutarate = 3-(imidazol-4-yl)-2-oxopropyl phosphate + L-glutamate. Its pathway is amino-acid biosynthesis; L-histidine biosynthesis; L-histidine from 5-phospho-alpha-D-ribose 1-diphosphate: step 7/9. The sequence is that of Histidinol-phosphate aminotransferase 2 from Legionella pneumophila (strain Lens).